The chain runs to 514 residues: RNA-binding region-containing protein 3 (514 aa).

Positions 1–26 are disordered; it reads MAGPEPPMPLSRGGPGSASLSPPRGD. S21 is subject to Phosphoserine. Positions 27–102 constitute an RRM 1 domain; sequence RTLLVRHLPA…HTLVVEFAKE (76 aa). Disordered stretches follow at residues 106 to 133, 213 to 282, and 337 to 363; these read VHSPCSTSNTEKKKRLDDTVENDKEKKE, MPLH…VRKK, and ETQPNNEEENSDSPDTGLDSNTGFGKI. Position 108 is a phosphoserine (S108). Residues 115–133 are compositionally biased toward basic and acidic residues; it reads TEKKKRLDDTVENDKEKKE. Pro residues predominate over residues 217-230; sequence APLPPTSPQPPEEP. S349 carries the post-translational modification Phosphoserine. In terms of domain architecture, RRM 2 spans 418–501; that stretch reads CRIYVKNLAR…KPMVVQFARS (84 aa).

Component of the U11/U12 snRNPs that are part of the U12-type spliceosome. Found in a complex with m(7)G-capped U12 snRNA. Interacts with PDCD7.

It is found in the nucleus. Participates in pre-mRNA U12-dependent splicing, performed by the minor spliceosome which removes U12-type introns. U12-type introns comprises less than 1% of all non-coding sequences. Binds to the 3'-stem-loop of m(7)G-capped U12 snRNA. This is RNA-binding region-containing protein 3 (Rnpc3) from Mus musculus (Mouse).